The following is a 75-amino-acid chain: Conotoxin Vn5.6 (75 aa).

The first 19 residues, 1 to 19 (MLCLPVFIILLLLASPAAP), serve as a signal peptide directing secretion. Residues 20-59 (NPLEKRIQSDLIRAALEDADMKTGEREILNIIDSISDVAK) constitute a propeptide that is removed on maturation. Residue Gln60 is modified to Pyrrolidone carboxylic acid.

The protein belongs to the conotoxin T superfamily. In terms of processing, contains 2 disulfide bonds that can be either 'C1-C3, C2-C4' or 'C1-C4, C2-C3', since these disulfide connectivities have been observed for conotoxins with cysteine framework V (for examples, see AC P0DQQ7 and AC P81755). As to expression, expressed by the venom duct.

The protein resides in the secreted. This chain is Conotoxin Vn5.6, found in Conus ventricosus (Mediterranean cone).